Here is a 486-residue protein sequence, read N- to C-terminus: BTB/POZ domain and ankyrin repeat-containing protein NBCL (486 aa).

The BTB domain occupies 25 to 115; it reads SDVTFSVEGR…LYSGQVSIVP (91 aa). The C2HC NPR-type zinc-finger motif lies at 121–135; that stretch reads RPNCGERGCWHTHCS. Zn(2+) is bound by residues C124, C129, H131, and C134. ANK repeat units lie at residues 257–286, 287–316, 321–350, and 354–388; these read QKIR…LNLD, EALA…DVNY, AGKT…DPNV, and DNVT…KLRL. 2 disordered regions span residues 403 to 441 and 464 to 486; these read EEGN…NNHN and QMSD…HHDY. Low complexity-rich tracts occupy residues 406–418 and 432–441; these read NANN…TTTT and SSSSSGNNHN. Basic and acidic residues predominate over residues 466–475; that stretch reads SDDHGGRHGD.

Belongs to the plant 'ANKYRIN-BTB/POZ' family. 'NOOT-BOP-COCH-like' (NBCL) subfamily. As to quaternary structure, homodimer.

The protein localises to the nucleus. It is found in the cytoplasm. The protein resides in the cell membrane. Its pathway is protein modification; protein ubiquitination. In terms of biological role, may act as a substrate-specific adapter of an E3 ubiquitin-protein ligase complex (CUL3-RBX1-BTB) which mediates the ubiquitination and subsequent proteasomal degradation of target proteins. Transcriptional co-regulator involved in the promotion of leaf and floral meristem fate and determinacy. Necessary for the development of stipules at the base of petioles. Required for the abscission of senescent organs, probably by regulating the cell wall disorganization in abscission zones (AZs, e.g. pulvini at the base of leaves). Promotes slightly root-cap border cells separation from the root tip. Involved in the coordination of the symbiotic nodule developmental program; promotes the formation of root nodules by interacting directly with APP1 to modulate the expression of the nuclear transcription factor Y subunit (NF-YA1), a key nodulin. Necessary for the robust maintenance of nodule identity throughout the nodule developmental program. This chain is BTB/POZ domain and ankyrin repeat-containing protein NBCL, found in Lupinus angustifolius (Narrow-leaved blue lupine).